Consider the following 188-residue polypeptide: Insulin-like growth factor 1 (188 aa).

The tract at residues 45–73 (GPETLCGAELVDTLQFVCGERGFYFSKPT) is b. 3 disulfides stabilise this stretch: cysteine 50–cysteine 92, cysteine 62–cysteine 105, and cysteine 91–cysteine 96. The c stretch occupies residues 74-85 (GYGPSSRRSHNR). The segment at 86-106 (GIVDECCFQSCELRRLEMYCA) is a. The interval 107–114 (PVKSGKAA) is d. Residues 115–188 (RSVRAQRHTD…GNTGGRNYRM (74 aa)) constitute a propeptide, e peptide. Residues 115–188 (RSVRAQRHTD…GNTGGRNYRM (74 aa)) are disordered. The span at 140–153 (RGTERRTAQHPDKT) shows a compositional bias: basic and acidic residues.

The protein belongs to the insulin family. In terms of tissue distribution, all the isoforms are expressed in embryos, juvenile and adult liver, muscle and brain. At least one isoform is expressed in heart, kidney, testes, ovary, adipose tissue and spleen of juvenile salmon.

It is found in the secreted. Functionally, the insulin-like growth factors, isolated from plasma, are structurally and functionally related to insulin but have a much higher growth-promoting activity. Acts as a ligand for IGF1R. Binds to the alpha subunit of IGF1R, leading to the activation of the intrinsic tyrosine kinase activity which autophosphorylates tyrosine residues in the beta subunit thus initiatiating a cascade of down-stream signaling events leading to activation of the PI3K-AKT/PKB and the Ras-MAPK pathways. Binds to integrins. Its binding to integrins and subsequent ternary complex formation with integrins and IGFR1 are essential for IGF1 signaling. The chain is Insulin-like growth factor 1 from Oncorhynchus kisutch (Coho salmon).